The primary structure comprises 601 residues: Elongation factor 4 (601 aa).

Residues Arg7–Lys189 form the tr-type G domain. Residues Asp19–Thr24 and Asn136–Asp139 contribute to the GTP site.

The protein belongs to the TRAFAC class translation factor GTPase superfamily. Classic translation factor GTPase family. LepA subfamily.

Its subcellular location is the cell inner membrane. It carries out the reaction GTP + H2O = GDP + phosphate + H(+). In terms of biological role, required for accurate and efficient protein synthesis under certain stress conditions. May act as a fidelity factor of the translation reaction, by catalyzing a one-codon backward translocation of tRNAs on improperly translocated ribosomes. Back-translocation proceeds from a post-translocation (POST) complex to a pre-translocation (PRE) complex, thus giving elongation factor G a second chance to translocate the tRNAs correctly. Binds to ribosomes in a GTP-dependent manner. The protein is Elongation factor 4 of Xanthomonas campestris pv. campestris (strain 8004).